Here is a 373-residue protein sequence, read N- to C-terminus: uncharacterized protein (373 aa).

Residues Lys14–Met168 enclose the CP-type G domain. Gly117 to Ser124 serves as a coordination point for GTP.

Belongs to the TRAFAC class YlqF/YawG GTPase family.

This is an uncharacterized protein from Methanocaldococcus jannaschii (strain ATCC 43067 / DSM 2661 / JAL-1 / JCM 10045 / NBRC 100440) (Methanococcus jannaschii).